The following is a 288-amino-acid chain: Intermediate transcription factor 3 small subunit (288 aa).

Belongs to the orthopoxvirus OPG134 family. As to quaternary structure, heterodimer of a 45 kDa (A23R) and a 32 kDa (A8R) subunit to form the virus intermediate transcription factor (VITF)-3.

Its function is as follows. Acts with RNA polymerase to initiate transcription from intermediate gene promoters. The protein is Intermediate transcription factor 3 small subunit (OPG134) of Homo sapiens (Human).